Consider the following 603-residue polypeptide: MKLAHLSLFLLALHLSSSRSPSASDLPQEELVDQKCLLQKYTHRSCNKVFCQPWQRCIEGTCICKLPYQCPRAGTPVCAMNGRSYPTYCHQKSFECLHPEIKFSHNGTCAAEGKFNVSLIYGRTKTEGLVQVKLVDQDERMFICKNSWSMAEANVACVDLGFPLGVRDIQGSFNISGNLHINDTECLHVHCRGVETSLAECAFTKRRTELSNGLAGVVCYKQDADFPTSLSFQCVNGKHIPQEKACNGVNDCGDQSDELCCKGCRGNASLCKSGVCIPDQYKCNGEVDCITGEDESRCEEDRQQNIPKGLARSAQGEAEIETEETEMLTPGMDNERKRIKSLLPKLSCGVKRNTHTRRKRVIGGKPANVGDYPWQVAIKDGQRITCGGIYIGGCWILTAAHCVRPSRAHSYQVWTALLDWLKPNSQLGIQTVKRVIVHEKYNGATFQNDIALIEMKMHTGKKECELPNSVPACVPWSPYLFQPNDRCIISGWGRGKDNQKVYSLRWGEVDLIGNCSQFYPDRYYEKEMQCAGTRDGSIDACKGDSGGPLVCEDINNVTYVWGIVSWGENCGKPEFPGVYTRVANYFDWISYHVGRSLVSQHNV.

The first 18 residues, methionine 1–serine 18, serve as a signal peptide directing secretion. 20 disulfides stabilise this stretch: cysteine 36-cysteine 260, cysteine 46-cysteine 57, cysteine 51-cysteine 62, cysteine 64-cysteine 96, cysteine 70-cysteine 89, cysteine 78-cysteine 109, cysteine 144-cysteine 186, cysteine 157-cysteine 219, cysteine 191-cysteine 201, cysteine 234-cysteine 252, cysteine 246-cysteine 261, cysteine 264-cysteine 276, cysteine 271-cysteine 289, cysteine 283-cysteine 298, cysteine 348-cysteine 473, cysteine 386-cysteine 402, cysteine 394-cysteine 464, cysteine 487-cysteine 551, cysteine 515-cysteine 530, and cysteine 541-cysteine 570. Positions isoleucine 58–alanine 111 constitute a Kazal-like domain. Residues asparagine 106, asparagine 116, asparagine 174, and asparagine 182 are each glycosylated (N-linked (GlcNAc...) asparagine). An SRCR domain is found at valine 117 to valine 217. 2 LDL-receptor class A domains span residues valine 218–lysine 262 and glycine 263–glutamate 299. Ca(2+) is bound by residues lysine 244, asparagine 247, valine 249, aspartate 251, aspartate 257, and glutamate 258. Asparagine 267 carries N-linked (GlcNAc...) asparagine glycosylation. Ca(2+)-binding residues include tyrosine 281, asparagine 284, glutamate 286, aspartate 288, aspartate 294, and glutamate 295. The Peptidase S1 domain occupies valine 361 to glycine 594. Residues histidine 401 and aspartate 449 each act as charge relay system in the active site. N-linked (GlcNAc...) asparagine glycosylation is present at asparagine 514. The active-site Charge relay system is serine 545. A glycan (N-linked (GlcNAc...) asparagine) is linked at asparagine 556.

Belongs to the peptidase S1 family. Heterodimer of a light and heavy chains; disulfide-linked. The fully processed and mature protein circulates as a zymogen, and is allosterically activated by substrate-induced remodeling of the active site. Interacts with C3b. Interacts with complement factor H. Expressed in the liver by hepatocytes. Also present in other cells such as monocytes, fibroblasts or keratinocytes.

The protein localises to the secreted. Its subcellular location is the extracellular space. It catalyses the reaction Inactivates complement subcomponents C3b, iC3b and C4b by proteolytic cleavage.. In terms of biological role, trypsin-like serine protease that plays an essential role in regulating the immune response by controlling all complement pathways. Inhibits these pathways by cleaving three peptide bonds in the alpha-chain of C3b and two bonds in the alpha-chain of C4b thereby inactivating these proteins. Essential cofactors for these reactions include factor H and C4BP in the fluid phase and membrane cofactor protein/CD46 and CR1 on cell surfaces. The presence of these cofactors on healthy cells allows degradation of deposited C3b by CFI in order to prevent undesired complement activation, while in apoptotic cells or microbes, the absence of such cofactors leads to C3b-mediated complement activation and subsequent opsonization. This chain is Complement factor I (Cfi), found in Mus musculus (Mouse).